The primary structure comprises 191 residues: MSDATLSLKQRLGGRSLYLVGMMGSGKTSTGRPLAEQLGYGFVDADAVIEQAAGCSIPEIFERDGEAGFRALESQVLNAIGQRHSLVVATGGGVVTQQENWGLLHSGIVVWLDVVPEQLMQRLRADSTVRPLLQTEDPDAALNALLNQRRPLYAEADLTVVINQETPLAVADGILQLLPSLLKDPTQRRTD.

24–29 contributes to the ATP binding site; sequence GSGKTS. Thr28 contacts Mg(2+). Residues Asp46, Arg70, and Gly92 each contribute to the substrate site. ATP is bound at residue Arg130. Position 149 (Arg149) interacts with substrate.

This sequence belongs to the shikimate kinase family. In terms of assembly, monomer. The cofactor is Mg(2+).

Its subcellular location is the cytoplasm. It carries out the reaction shikimate + ATP = 3-phosphoshikimate + ADP + H(+). The protein operates within metabolic intermediate biosynthesis; chorismate biosynthesis; chorismate from D-erythrose 4-phosphate and phosphoenolpyruvate: step 5/7. Functionally, catalyzes the specific phosphorylation of the 3-hydroxyl group of shikimic acid using ATP as a cosubstrate. In Parasynechococcus marenigrum (strain WH8102), this protein is Shikimate kinase.